Here is a 257-residue protein sequence, read N- to C-terminus: Adenosylcobinamide-GDP ribazoletransferase (257 aa).

Helical transmembrane passes span 7–27, 39–59, 61–81, 113–133, 143–163, and 196–216; these read QLTL…PTWV, RYFG…YEIT, GFLP…VVTG, IGTY…ILLS, VVTA…SLIF, and VLVL…GLVL.

The protein belongs to the CobS family. It depends on Mg(2+) as a cofactor.

It is found in the cell inner membrane. It carries out the reaction alpha-ribazole + adenosylcob(III)inamide-GDP = adenosylcob(III)alamin + GMP + H(+). The enzyme catalyses alpha-ribazole 5'-phosphate + adenosylcob(III)inamide-GDP = adenosylcob(III)alamin 5'-phosphate + GMP + H(+). It functions in the pathway cofactor biosynthesis; adenosylcobalamin biosynthesis; adenosylcobalamin from cob(II)yrinate a,c-diamide: step 7/7. In terms of biological role, joins adenosylcobinamide-GDP and alpha-ribazole to generate adenosylcobalamin (Ado-cobalamin). Also synthesizes adenosylcobalamin 5'-phosphate from adenosylcobinamide-GDP and alpha-ribazole 5'-phosphate. The protein is Adenosylcobinamide-GDP ribazoletransferase of Shewanella woodyi (strain ATCC 51908 / MS32).